Here is a 618-residue protein sequence, read N- to C-terminus: MPIQVLPPQLANQIAAGEVVERPASVVKELVENSLDAGATRVDIDIERGGAKLIRIRDNGCGIKKEELALALARHATSKIASLDDLEAIISLGFRGEALASISSVSRLTLTSRTAEQAEAWQAYAEGRDMDVTVKPAAHPVGTTLEVLDLFYNTPARRKFMRTEKTEFNHIDEIIRRIALARFDVTLNLSHNGKLVRQYRAVAKDGQKERRLGAICGTPFLEQALAIEWQHGDLTLRGWVADPNHTTTALTEIQYCYVNGRMMRDRLINHAIRQACEDKLGADQQPAFVLYLEIDPHQVDVNVHPAKHEVRFHQSRLVHDFIYQGVLSVLQQQTETTLPLEDIAPAPRHVPENRIAAGRNHFAVPAEPTAAREPATPRYSGGASGGNGGRQSAGGWPHAQPGYQKQQGEVYRALLQTPTTSPAPEAVAPALDGHSQSFGRVLTIVCGDCALLEHAGTIQLLSLPVAERWLRQAQLTPGQSPVCAQPLLIPLRLKVSADEKAALQKAQSLLGELGIEFQSDAQHVTIRAVPLPLRQQNLQILIPELIGYLAQQTTFATVNIAQWIARNVQSEHPQWSMAQAISLLADVERLCPQLVKAPPGGLLQPVDLHSAMNALKHE.

Residues 367–381 (EPTAAREPATPRYSG) are compositionally biased toward low complexity. Residues 367-402 (EPTAAREPATPRYSGGASGGNGGRQSAGGWPHAQPG) are disordered. Positions 382–392 (GASGGNGGRQS) are enriched in gly residues.

The protein belongs to the DNA mismatch repair MutL/HexB family.

Functionally, this protein is involved in the repair of mismatches in DNA. It is required for dam-dependent methyl-directed DNA mismatch repair. May act as a 'molecular matchmaker', a protein that promotes the formation of a stable complex between two or more DNA-binding proteins in an ATP-dependent manner without itself being part of a final effector complex. The chain is DNA mismatch repair protein MutL from Salmonella heidelberg (strain SL476).